A 315-amino-acid chain; its full sequence is Glycine--tRNA ligase alpha subunit (315 aa).

Belongs to the class-II aminoacyl-tRNA synthetase family. As to quaternary structure, tetramer of two alpha and two beta subunits.

It localises to the cytoplasm. It catalyses the reaction tRNA(Gly) + glycine + ATP = glycyl-tRNA(Gly) + AMP + diphosphate. The chain is Glycine--tRNA ligase alpha subunit from Pseudomonas syringae pv. tomato (strain ATCC BAA-871 / DC3000).